The primary structure comprises 253 residues: Ciliary microtubule associated protein 1B (253 aa).

One copy of the STPGR repeat lies at 182 to 207; it reads PGPCAYQVVSPGVYKSRAPQFTILAR.

This sequence belongs to the CIMAP family.

It localises to the cell projection. Its subcellular location is the cilium. It is found in the flagellum. This chain is Ciliary microtubule associated protein 1B, found in Homo sapiens (Human).